Reading from the N-terminus, the 469-residue chain is MELISPTVIIILGCLALFLLLQRKNLRRPPCIKGWIPWIGVGFEFGKAPLEFIEKARIKYGPIFTVFAMGNRMTFVTEEEGINVFLKSKKVDFELAVQNIVYRTASIPKNVFLALHEKLYIMLKGKMGTVNLHQFTGQLTEELHEQLENLGTHGTMDLNNLVRHLLYPVTVNMLFNKSLFSTNKKKIKEFHQYFQVYDEDFEYGSQLPECLLRNWSKSKKWFLELFEKNIPDIKACKSAKDNSMTLLQATLDIVETETSKENSPNYGLLLLWASLSNAVPVAFWTLAYVLSHPDIHKAIMEGISSVFGKAGKDKIKVSEDDLENLLLIKWCVLETIRLKAPGVITRKVVKPVEILNYIIPSGDLLMLSPFWLHRNPKYFPEPELFKPERWKKANLEKHSFLDCFMAFGSGKFQCPARWFALLEVQMCIILILYKYDCSLLDPLPKQSYLHLVGVPQPEGQCRIEYKQRI.

An N-terminal signal peptide occupies residues 1 to 23; it reads MELISPTVIIILGCLALFLLLQR. Transmembrane regions (helical) follow at residues 267–287, 352–372, and 412–432; these read GLLLLWASLSNAVPVAFWTLA, VEILNYIIPSGDLLMLSPFWL, and FQCPARWFALLEVQMCIILIL. Position 414 (Cys414) interacts with heme.

Belongs to the cytochrome P450 family. The cofactor is heme. As to expression, liver specific.

It localises to the endoplasmic reticulum membrane. It is found in the microsome membrane. The catalysed reaction is (24S)-hydroxycholesterol + reduced [NADPH--hemoprotein reductase] + O2 = (24S)-7alpha-dihydroxycholesterol + oxidized [NADPH--hemoprotein reductase] + H2O + H(+). The protein operates within steroid metabolism; cholesterol degradation. Its pathway is lipid metabolism; bile acid biosynthesis. Functionally, a cytochrome P450 monooxygenase involved in neural cholesterol clearance through bile acid synthesis. Catalyzes 7-alpha hydroxylation of (24S)-hydroxycholesterol, a neural oxysterol that is metabolized to bile acids in the liver. Mechanistically, uses molecular oxygen inserting one oxygen atom into a substrate, and reducing the second into a water molecule, with two electrons provided by NADPH via cytochrome P450 reductase (CPR; NADPH-ferrihemoprotein reductase). The chain is 24-hydroxycholesterol 7-alpha-hydroxylase from Homo sapiens (Human).